The chain runs to 188 residues: Elongation factor P (188 aa).

The protein belongs to the elongation factor P family.

The protein resides in the cytoplasm. It participates in protein biosynthesis; polypeptide chain elongation. Involved in peptide bond synthesis. Stimulates efficient translation and peptide-bond synthesis on native or reconstituted 70S ribosomes in vitro. Probably functions indirectly by altering the affinity of the ribosome for aminoacyl-tRNA, thus increasing their reactivity as acceptors for peptidyl transferase. The polypeptide is Elongation factor P (Parabacteroides distasonis (strain ATCC 8503 / DSM 20701 / CIP 104284 / JCM 5825 / NCTC 11152)).